A 105-amino-acid chain; its full sequence is MHIKKGDNVKVIAGKDKGKEGKVIATEPKKDRVVVEGVNVIKKHQKPTQLNPEGGILETEAAIHVSNVQLLDPKTNEPTRVGYKFVDGKKVRIVKKSGEEIKTNN.

This sequence belongs to the universal ribosomal protein uL24 family. Part of the 50S ribosomal subunit.

Functionally, one of two assembly initiator proteins, it binds directly to the 5'-end of the 23S rRNA, where it nucleates assembly of the 50S subunit. Its function is as follows. One of the proteins that surrounds the polypeptide exit tunnel on the outside of the subunit. The sequence is that of Large ribosomal subunit protein uL24 from Staphylococcus haemolyticus (strain JCSC1435).